We begin with the raw amino-acid sequence, 156 residues long: Cyclic pyranopterin monophosphate synthase (156 aa).

Substrate-binding positions include 75–77 (LCH) and 111–112 (ME). The active site involves aspartate 126.

This sequence belongs to the MoaC family. Homohexamer; trimer of dimers.

The enzyme catalyses (8S)-3',8-cyclo-7,8-dihydroguanosine 5'-triphosphate = cyclic pyranopterin phosphate + diphosphate. It participates in cofactor biosynthesis; molybdopterin biosynthesis. Its function is as follows. Catalyzes the conversion of (8S)-3',8-cyclo-7,8-dihydroguanosine 5'-triphosphate to cyclic pyranopterin monophosphate (cPMP). This chain is Cyclic pyranopterin monophosphate synthase, found in Corynebacterium glutamicum (strain ATCC 13032 / DSM 20300 / JCM 1318 / BCRC 11384 / CCUG 27702 / LMG 3730 / NBRC 12168 / NCIMB 10025 / NRRL B-2784 / 534).